A 381-amino-acid polypeptide reads, in one-letter code: E3 ubiquitin-protein ligase RNF13 (381 aa).

The signal sequence occupies residues methionine 1–alanine 34. The Lumenal portion of the chain corresponds to aspartate 35–tyrosine 182. A PA domain is found at leucine 64–glutamate 160. An N-linked (GlcNAc...) asparagine glycan is attached at asparagine 88. Residues tyrosine 183–isoleucine 203 form a helical membrane-spanning segment. At threonine 204 to valine 381 the chain is on the cytoplasmic side. The segment at cysteine 240 to lysine 282 adopts an RING-type; atypical zinc-finger fold. Positions valine 285–valine 381 are disordered. Composition is skewed to acidic residues over residues serine 292–valine 305 and serine 339–aspartate 353. Residues asparagine 370 to valine 381 are compositionally biased toward basic and acidic residues.

Widely expressed (at protein level). Lowest levels in the liver, moderate levels in the heart, intestine and spleen, and high levels in skeletal muscle, kidney, proventriculus and brain. Also expressed in inner ear after noise exposure.

Its subcellular location is the endoplasmic reticulum membrane. It localises to the late endosome membrane. The protein localises to the lysosome membrane. It is found in the nucleus inner membrane. The catalysed reaction is S-ubiquitinyl-[E2 ubiquitin-conjugating enzyme]-L-cysteine + [acceptor protein]-L-lysine = [E2 ubiquitin-conjugating enzyme]-L-cysteine + N(6)-ubiquitinyl-[acceptor protein]-L-lysine.. The protein operates within protein modification; protein ubiquitination. In terms of biological role, E3 ubiquitin-protein ligase that regulates cell proliferation. Involved in apoptosis regulation. Mediates ER stress-induced activation of JNK signaling pathway and apoptosis by promoting ERN1 activation and splicing of XBP1 mRNA. In Gallus gallus (Chicken), this protein is E3 ubiquitin-protein ligase RNF13.